Consider the following 191-residue polypeptide: Small ribosomal subunit protein uS11m (191 aa).

The tract at residues 37-62 (PRLEDSAARQNTEREAAPSRFSLYPP) is disordered. Basic and acidic residues predominate over residues 38 to 53 (RLEDSAARQNTEREAA).

The protein belongs to the universal ribosomal protein uS11 family. Component of the mitochondrial ribosome small subunit (28S) which comprises a 12S rRNA and about 30 distinct proteins.

It localises to the mitochondrion. The polypeptide is Small ribosomal subunit protein uS11m (Mrps11) (Mus musculus (Mouse)).